A 76-amino-acid polypeptide reads, in one-letter code: EMBRYO SURROUNDING FACTOR 1-like protein 8 (76 aa).

The first 22 residues, 1–22 (MSSSQFFILCIILISSFPLHEC), serve as a signal peptide directing secretion. 4 cysteine pairs are disulfide-bonded: Cys-38–Cys-54, Cys-43–Cys-74, Cys-52–Cys-70, and Cys-55–Cys-63.

The protein belongs to the MEG family. Expressed in flowers.

This is EMBRYO SURROUNDING FACTOR 1-like protein 8 (ESFL8) from Arabidopsis thaliana (Mouse-ear cress).